Here is a 97-residue protein sequence, read N- to C-terminus: Large ribosomal subunit protein bL27 (97 aa).

Positions 1 to 12 (MLNLNLANLQFM) are excised as a propeptide. The segment at 15–37 (KKGGGSTSNGRDSQAKRLGAKAA) is disordered.

It belongs to the bacterial ribosomal protein bL27 family. Post-translationally, the N-terminus is cleaved by ribosomal processing cysteine protease Prp.

This is Large ribosomal subunit protein bL27 from Streptococcus suis (strain 98HAH33).